We begin with the raw amino-acid sequence, 105 residues long: Phosphoribosyl-ATP pyrophosphatase (105 aa).

This sequence belongs to the PRA-PH family.

The protein localises to the cytoplasm. The enzyme catalyses 1-(5-phospho-beta-D-ribosyl)-ATP + H2O = 1-(5-phospho-beta-D-ribosyl)-5'-AMP + diphosphate + H(+). Its pathway is amino-acid biosynthesis; L-histidine biosynthesis; L-histidine from 5-phospho-alpha-D-ribose 1-diphosphate: step 2/9. The sequence is that of Phosphoribosyl-ATP pyrophosphatase from Roseobacter denitrificans (strain ATCC 33942 / OCh 114) (Erythrobacter sp. (strain OCh 114)).